Here is a 482-residue protein sequence, read N- to C-terminus: D-inositol 3-phosphate glycosyltransferase (482 aa).

Histidine 63 provides a ligand contact to 1D-myo-inositol 3-phosphate. Residues 69 to 70 (QP) and glycine 77 each bind UDP-N-acetyl-alpha-D-glucosamine. Residues 74–79 (DAGGMN), lysine 132, tyrosine 165, threonine 189, and arginine 209 each bind 1D-myo-inositol 3-phosphate. Positions 289, 294, and 355 each coordinate UDP-N-acetyl-alpha-D-glucosamine. Positions 364, 365, and 367 each coordinate Mg(2+). UDP-N-acetyl-alpha-D-glucosamine contacts are provided by glutamate 377 and glutamate 385. Threonine 391 contributes to the Mg(2+) binding site.

This sequence belongs to the glycosyltransferase group 1 family. MshA subfamily. Homodimer.

The enzyme catalyses 1D-myo-inositol 3-phosphate + UDP-N-acetyl-alpha-D-glucosamine = 1D-myo-inositol 2-acetamido-2-deoxy-alpha-D-glucopyranoside 3-phosphate + UDP + H(+). Functionally, catalyzes the transfer of a N-acetyl-glucosamine moiety to 1D-myo-inositol 3-phosphate to produce 1D-myo-inositol 2-acetamido-2-deoxy-glucopyranoside 3-phosphate in the mycothiol biosynthesis pathway. The protein is D-inositol 3-phosphate glycosyltransferase of Salinispora tropica (strain ATCC BAA-916 / DSM 44818 / JCM 13857 / NBRC 105044 / CNB-440).